We begin with the raw amino-acid sequence, 404 residues long: Coenzyme F(430) synthetase (404 aa).

Position 112–117 (112–117) interacts with ATP; that stretch reads GVKGKT.

The protein belongs to the MurCDEF family.

It catalyses the reaction 15,17(3)-seco-F430-17(3)-acid + ATP = coenzyme F430 + ADP + phosphate. Involved in the biosynthesis of the unique nickel-containing tetrapyrrole coenzyme F430, the prosthetic group of methyl-coenzyme M reductase (MCR), which plays a key role in methanogenesis and anaerobic methane oxidation. Catalyzes the activation the g-propionate side chain of 15,17(3)-seco-F430-17(3)-acid (seco-F430) for intramolecular C-C bond formation to yield the carbocyclic F ring of coenzyme F430. In Methanocaldococcus jannaschii (strain ATCC 43067 / DSM 2661 / JAL-1 / JCM 10045 / NBRC 100440) (Methanococcus jannaschii), this protein is Coenzyme F(430) synthetase.